Reading from the N-terminus, the 246-residue chain is Glutamate/aspartate import permease protein GltJ (246 aa).

The ABC transmembrane type-1 domain occupies 29–230; sequence FQVTIALSIC…LINAFIMLVM (202 aa). Transmembrane regions (helical) follow at residues 33–53, 74–94, 104–124, 179–196, and 212–232; these read IALSICAWIIAFLVGSFFGIL, NVPLIVQFFTWYLVIPELLPE, LDPNIQFFLSSMLCLGLFTAA, LVKNSAIASTIGLVDMAA, and FTAITLAYVLINAFIMLVMTL.

It belongs to the binding-protein-dependent transport system permease family. HisMQ subfamily. As to quaternary structure, the complex is composed of two ATP-binding proteins (GltL), two transmembrane proteins (GltJ and GltK) and a solute-binding protein (GltI).

The protein localises to the cell inner membrane. Functionally, part of the ABC transporter complex GltIJKL involved in glutamate and aspartate uptake. Probably responsible for the translocation of the substrate across the membrane. The chain is Glutamate/aspartate import permease protein GltJ (gltJ) from Escherichia coli O6:H1 (strain CFT073 / ATCC 700928 / UPEC).